The sequence spans 569 residues: Proline--tRNA ligase (569 aa).

The protein belongs to the class-II aminoacyl-tRNA synthetase family. ProS type 1 subfamily. In terms of assembly, homodimer.

The protein localises to the cytoplasm. It catalyses the reaction tRNA(Pro) + L-proline + ATP = L-prolyl-tRNA(Pro) + AMP + diphosphate. Its function is as follows. Catalyzes the attachment of proline to tRNA(Pro) in a two-step reaction: proline is first activated by ATP to form Pro-AMP and then transferred to the acceptor end of tRNA(Pro). As ProRS can inadvertently accommodate and process non-cognate amino acids such as alanine and cysteine, to avoid such errors it has two additional distinct editing activities against alanine. One activity is designated as 'pretransfer' editing and involves the tRNA(Pro)-independent hydrolysis of activated Ala-AMP. The other activity is designated 'posttransfer' editing and involves deacylation of mischarged Ala-tRNA(Pro). The misacylated Cys-tRNA(Pro) is not edited by ProRS. This Campylobacter jejuni subsp. doylei (strain ATCC BAA-1458 / RM4099 / 269.97) protein is Proline--tRNA ligase.